We begin with the raw amino-acid sequence, 595 residues long: Probable inactive glycosyltransferase 25 family member 3 (595 aa).

A signal peptide spans 1-24; the sequence is MRAAPAAPLLQLLLLLGPRPEAAG. N-linked (GlcNAc...) asparagine glycosylation is found at N75, N153, N237, and N360. The disordered stretch occupies residues 576–595; sequence RLDLAGGSGHSLRPHPRDEL. The short motif at 592-595 is the Prevents secretion from ER element; the sequence is RDEL.

Belongs to the glycosyltransferase 25 family.

Its subcellular location is the endoplasmic reticulum lumen. Functionally, probable cell adhesion protein involved in leukocyte transmigration across the blood-brain barrier. Does not express any beta-galactosyltransferase activity in vitro. This Bos taurus (Bovine) protein is Probable inactive glycosyltransferase 25 family member 3 (CERCAM).